Here is a 265-residue protein sequence, read N- to C-terminus: 3-methyl-2-oxobutanoate hydroxymethyltransferase (265 aa).

2 residues coordinate Mg(2+): Asp45 and Asp84. Residues 45 to 46, Asp84, and Lys112 each bind 3-methyl-2-oxobutanoate; that span reads DS. Glu114 is a binding site for Mg(2+). Glu182 functions as the Proton acceptor in the catalytic mechanism.

This sequence belongs to the PanB family. In terms of assembly, homodecamer; pentamer of dimers. It depends on Mg(2+) as a cofactor.

Its subcellular location is the cytoplasm. It carries out the reaction 3-methyl-2-oxobutanoate + (6R)-5,10-methylene-5,6,7,8-tetrahydrofolate + H2O = 2-dehydropantoate + (6S)-5,6,7,8-tetrahydrofolate. It participates in cofactor biosynthesis; (R)-pantothenate biosynthesis; (R)-pantoate from 3-methyl-2-oxobutanoate: step 1/2. Catalyzes the reversible reaction in which hydroxymethyl group from 5,10-methylenetetrahydrofolate is transferred onto alpha-ketoisovalerate to form ketopantoate. The chain is 3-methyl-2-oxobutanoate hydroxymethyltransferase from Baumannia cicadellinicola subsp. Homalodisca coagulata.